Reading from the N-terminus, the 829-residue chain is Probable beta-glucosidase H (829 aa).

A glycan (N-linked (GlcNAc...) asparagine) is linked at asparagine 13. Residue aspartate 225 is part of the active site. 5 N-linked (GlcNAc...) asparagine glycosylation sites follow: asparagine 304, asparagine 473, asparagine 602, asparagine 627, and asparagine 664. The PA14 domain occupies 389-548; sequence RMLSNAVIHF…DPEQMVANAV (160 aa).

This sequence belongs to the glycosyl hydrolase 3 family.

The protein resides in the secreted. The enzyme catalyses Hydrolysis of terminal, non-reducing beta-D-glucosyl residues with release of beta-D-glucose.. It participates in glycan metabolism; cellulose degradation. Functionally, beta-glucosidases are one of a number of cellulolytic enzymes involved in the degradation of cellulosic biomass. Catalyzes the last step releasing glucose from the inhibitory cellobiose. This chain is Probable beta-glucosidase H (bglH), found in Aspergillus fumigatus (strain ATCC MYA-4609 / CBS 101355 / FGSC A1100 / Af293) (Neosartorya fumigata).